We begin with the raw amino-acid sequence, 309 residues long: Putative taste receptor type 2 member 36 (309 aa).

Position 1 (methionine 1) is a topological domain, extracellular. A helical membrane pass occupies residues 2 to 22 (ICFLLIILSILVVFAFVLGNF). Residues 23–46 (SNGFIALVNVIDWVKRQKISSADQ) lie on the Cytoplasmic side of the membrane. A helical membrane pass occupies residues 47-67 (ILTALVVSRVGLLWVILLHWY). The Extracellular segment spans residues 68–79 (SNVLNSALYSSE). The chain crosses the membrane as a helical span at residues 80–100 (VIIFISNAWAIINHFSIWLAT). Over 101 to 126 (SLSIFYLLKIVNFSRLIFHHLKRKAK) the chain is Cytoplasmic. A helical transmembrane segment spans residues 127–147 (SVVLVIVLGPLVFLVCHLVMK). Residues 148 to 181 (HTYINVWTKEYEGNVTWKIKLRNAIHLSNLTVST) lie on the Extracellular side of the membrane. Asparagine 161 and asparagine 176 each carry an N-linked (GlcNAc...) asparagine glycan. A helical transmembrane segment spans residues 182 to 202 (LANLIPFTLTLISFLLLIYSL). Residues 203–229 (CKHLKKMQLHGKGSQDPSTKVHIKALQ) are Cytoplasmic-facing. The helical transmembrane segment at 230–250 (TVTSFLLLCAIYFLSMIISVC) threads the bilayer. Residues 251-259 (NFGRLEKQP) are Extracellular-facing. Residues 260–280 (VFMFCQAIIFSYPSTHPFILI) form a helical membrane-spanning segment. Topologically, residues 281-309 (LGNKKLKQIFLSVFWQMRYWVKGEKPSSP) are cytoplasmic.

Belongs to the G-protein coupled receptor T2R family.

The protein localises to the membrane. Its function is as follows. Putative taste receptor which may play a role in the perception of bitterness. This Homo sapiens (Human) protein is Putative taste receptor type 2 member 36.